Consider the following 414-residue polypeptide: Histidine--tRNA ligase (414 aa).

Belongs to the class-II aminoacyl-tRNA synthetase family. In terms of assembly, homodimer.

The protein localises to the cytoplasm. The enzyme catalyses tRNA(His) + L-histidine + ATP = L-histidyl-tRNA(His) + AMP + diphosphate + H(+). In Endomicrobium trichonymphae, this protein is Histidine--tRNA ligase.